The chain runs to 735 residues: Coiled-coil quantitatively-enriched protein 1 (735 aa).

Residues 514–719 (AAVQYLQRRL…TLKILEQKSL (206 aa)) are a coiled coil.

Interacts (during meiosis) with pcp1. Interacts with clr3, pot1, taz1 and tpz1.

It localises to the nucleus. The protein resides in the nucleoplasm. It is found in the chromosome. Its subcellular location is the telomere. In terms of biological role, component of the meiotic bouquet that facilitates meiotic nuclear reorganization of the telomeres to the centrosome. Links telomeres to the meiotic centrosome component pcp1. Essential for the formation of normal telomere clusters during meiotic prophase. Required for telomere length regulation and chromosome segregation. Required for proper positioning of nucleosomes at heterochromatic loci and for transcriptional gene silencing (TGS) function of the Snf2/Hdac-containing repressor complex (SHREC). The polypeptide is Coiled-coil quantitatively-enriched protein 1 (ccq1) (Schizosaccharomyces pombe (strain 972 / ATCC 24843) (Fission yeast)).